Here is a 178-residue protein sequence, read N- to C-terminus: ATP synthase subunit delta (178 aa).

The protein belongs to the ATPase delta chain family. F-type ATPases have 2 components, F(1) - the catalytic core - and F(0) - the membrane proton channel. F(1) has five subunits: alpha(3), beta(3), gamma(1), delta(1), epsilon(1). F(0) has three main subunits: a(1), b(2) and c(10-14). The alpha and beta chains form an alternating ring which encloses part of the gamma chain. F(1) is attached to F(0) by a central stalk formed by the gamma and epsilon chains, while a peripheral stalk is formed by the delta and b chains.

The protein localises to the cell inner membrane. In terms of biological role, f(1)F(0) ATP synthase produces ATP from ADP in the presence of a proton or sodium gradient. F-type ATPases consist of two structural domains, F(1) containing the extramembraneous catalytic core and F(0) containing the membrane proton channel, linked together by a central stalk and a peripheral stalk. During catalysis, ATP synthesis in the catalytic domain of F(1) is coupled via a rotary mechanism of the central stalk subunits to proton translocation. Its function is as follows. This protein is part of the stalk that links CF(0) to CF(1). It either transmits conformational changes from CF(0) to CF(1) or is implicated in proton conduction. This chain is ATP synthase subunit delta, found in Teredinibacter turnerae (strain ATCC 39867 / T7901).